A 737-amino-acid chain; its full sequence is Protein penguin (737 aa).

Residues 1 to 128 form a disordered region; sequence MVSSEPKGPA…EKKDLKLKRK (128 aa). Basic and acidic residues-rich tracts occupy residues 76 to 89 and 107 to 122; these read KKFDKSGATGDKRL and EGEKQDWNKFKKEKKD. Residues 139-490 form the PUM-HD domain; sequence EANQIHEKLR…EILEQIEAPI (352 aa). Pumilio repeat units follow at residues 167-202, 203-238, 239-274, 388-425, and 426-462; these read NVGDTISKVVKAHDTARVIQSMLKYASPALRAEISE, KLLPFTVEMCQSKYAQFCVQRMLKYGAPATKAKLVD, SLYGHIVRLAGHSIGSGLLDSMYQSATPNQRIYMRQ, NIKEHLLKIANHEHGHVFLISLLNALDDTKATKKAIYD, and HLHGDLKALMSSPYGRRVIQWLVAPGDTTCFHPEFIR. The disordered stretch occupies residues 577 to 638; it reads VESSSDDEDE…EEEPAAPLVS (62 aa). The segment covering 580 to 600 has biased composition (acidic residues); sequence SSDDEDEDEDEDEESDDEGDE. Over residues 601 to 615 the composition is skewed to basic and acidic residues; it reads KEQKEAAADDAEPKV. Basic residues predominate over residues 616–626; it reads KKAKKEPKKPK.

In Drosophila melanogaster (Fruit fly), this protein is Protein penguin.